Here is a 554-residue protein sequence, read N- to C-terminus: MQFDYIIIGAGSAGNVLATRLTEDPNTTVLLLEAGGPDYRFDFRTQMPAALAYPLQGKRYNWAYETEPEPYMNNRRMECGRGKGLGGSSLINGMCYIRGNAMDLDNWAKEPGLEHWSYLDCLPYYRKAETRDIGPNDYHGGDGPVSVTTPKPGNNPLFEAMVEAGVQAGYPRTDDLNGYQQEGFGPMDRTVTPQGRRASTARGYLDQARGRPNLTIRTHALTDHIIFAGKRAVGVEWLEGESTIPSKATANKEVLLCAGAIASPQILQRSGVGNPELLRQFDIPVVHDLPGVGENLQDHLEMYLQYECKEPVSLYPALQWWNQPKIGAEWLFGGTGIGASNQFEAGGFIRSRAEFAWPNIQYHFLPVAINYNGSNAVKEHGFQCHVGSMRSPSRGHVRLKSRDPHAHPAILFNYMSHEQDWQEFRDAIRITREIMNQPALDKYRGREISPGIECQSDAELDEFVRNHAETAFHPCGTCKMGYDEMAVVDGEGRVHGLEGLRVVDASIMPQIITGNLNATTIMIGEKMADAIRGRQPLPRSTATYYVAGDAPVRR.

Residue 4–33 (DYIIIGAGSAGNVLATRLTEDPNTTVLLLE) participates in FAD binding. Histidine 473 acts as the Proton acceptor in catalysis.

The protein belongs to the GMC oxidoreductase family. Requires FAD as cofactor.

It catalyses the reaction choline + A = betaine aldehyde + AH2. The catalysed reaction is betaine aldehyde + NAD(+) + H2O = glycine betaine + NADH + 2 H(+). It participates in amine and polyamine biosynthesis; betaine biosynthesis via choline pathway; betaine aldehyde from choline (cytochrome c reductase route): step 1/1. Functionally, involved in the biosynthesis of the osmoprotectant glycine betaine. Catalyzes the oxidation of choline to betaine aldehyde and betaine aldehyde to glycine betaine at the same rate. This chain is Oxygen-dependent choline dehydrogenase, found in Klebsiella pneumoniae subsp. pneumoniae (strain ATCC 700721 / MGH 78578).